The primary structure comprises 456 residues: Solute carrier family 49 member 4 homolog (456 aa).

Over 1 to 29 (MGLEWSSPGERQPLLFPGGPRSPRVFGRR) the chain is Cytoplasmic. A Di-leucine motif; mediates lysosomal localization motif is present at residues 14–15 (LL). The helical transmembrane segment at 30-50 (WLVLLLFSVLAFLQGLVWNSW) threads the bilayer. At 51–67 (GPIQISARTAYKFSGLD) the chain is on the lumenal side. Residues 68-88 (IALLVLWGPIGFLPCFLFMWL) form a helical membrane-spanning segment. Residues 89–95 (MDNRGLR) lie on the Cytoplasmic side of the membrane. A helical membrane pass occupies residues 96–116 (ITVLLTALLMVLGAGLRCVPV). The Lumenal segment spans residues 117–123 (EDLAIRR). Residues 124-144 (ILIHGGQLLNGFAGPTVMNAA) form a helical membrane-spanning segment. The Cytoplasmic portion of the chain corresponds to 145–162 (PFLSTTWFAPDERATATA). Residues 163-183 (IASMLNYLGGACAFLVGPLVV) traverse the membrane as a helical segment. At 184–207 (PAPNSTSGLLLYSGSTDAIKDRIE) the chain is on the lumenal side. N-linked (GlcNAc...) asparagine glycosylation occurs at N187. Residues 208–228 (AVMYAEFGIIFVVFAAILAYF) traverse the membrane as a helical segment. Over 229 to 259 (PARPPVPPSVAAASRRLSYRTSIFRLLSNLR) the chain is Cytoplasmic. A helical transmembrane segment spans residues 260 to 280 (FLLIVLAYAIPLGFYSGWIGV). Over 281-292 (LDLILTPVHVTQ) the chain is Lumenal. Residues 293 to 313 (VDAGWVGFWSIVGGCVVGIAV) form a helical membrane-spanning segment. Topologically, residues 314 to 326 (GRFADSIRGVLKP) are cytoplasmic. A helical membrane pass occupies residues 327–347 (ILLLLFSGATLSATWFTLTFL). Over 348–362 (SNVTHLPLTTATLYT) the chain is Lumenal. N349 carries N-linked (GlcNAc...) asparagine glycosylation. A helical transmembrane segment spans residues 363 to 383 (SCILIGVFLNGTVPIFFELFV). Topologically, residues 384–392 (ETVYPIPEG) are cytoplasmic. The chain crosses the membrane as a helical span at residues 393–413 (IACGVVTFLSNIFMGVLLVFL). Residues 414–420 (TMYQMEL) are Lumenal-facing. A helical membrane pass occupies residues 421-441 (SWLNWCLTGSCFLSLFFIACF). Residues 442-456 (RESYDRLYLDVFVSV) lie on the Cytoplasmic side of the membrane.

This sequence belongs to the major facilitator superfamily.

The protein resides in the lysosome membrane. It carries out the reaction pyridoxine(out) + n H(+)(out) = pyridoxine(in) + n H(+)(in). Functionally, mediates H(+)-dependent pyridoxine transport. This chain is Solute carrier family 49 member 4 homolog (slc49a4), found in Xenopus laevis (African clawed frog).